The chain runs to 153 residues: 3-hydroxyacyl-[acyl-carrier-protein] dehydratase FabZ (153 aa).

The active site involves H54.

This sequence belongs to the thioester dehydratase family. FabZ subfamily.

The protein resides in the cytoplasm. It carries out the reaction a (3R)-hydroxyacyl-[ACP] = a (2E)-enoyl-[ACP] + H2O. Involved in unsaturated fatty acids biosynthesis. Catalyzes the dehydration of short chain beta-hydroxyacyl-ACPs and long chain saturated and unsaturated beta-hydroxyacyl-ACPs. The chain is 3-hydroxyacyl-[acyl-carrier-protein] dehydratase FabZ from Shewanella loihica (strain ATCC BAA-1088 / PV-4).